Reading from the N-terminus, the 508-residue chain is Lysine--tRNA ligase (508 aa).

Mg(2+) is bound by residues Glu418 and Glu425.

It belongs to the class-II aminoacyl-tRNA synthetase family. In terms of assembly, homodimer. It depends on Mg(2+) as a cofactor.

The protein resides in the cytoplasm. The enzyme catalyses tRNA(Lys) + L-lysine + ATP = L-lysyl-tRNA(Lys) + AMP + diphosphate. This chain is Lysine--tRNA ligase, found in Burkholderia multivorans (strain ATCC 17616 / 249).